The chain runs to 317 residues: Sulfate adenylyltransferase subunit 2 (317 aa).

Disordered stretches follow at residues Met1–Asp21 and Arg298–Phe317.

The protein belongs to the PAPS reductase family. CysD subfamily. Heterodimer composed of CysD, the smaller subunit, and CysN.

It carries out the reaction sulfate + ATP + H(+) = adenosine 5'-phosphosulfate + diphosphate. The protein operates within sulfur metabolism; hydrogen sulfide biosynthesis; sulfite from sulfate: step 1/3. In terms of biological role, with CysN forms the ATP sulfurylase (ATPS) that catalyzes the adenylation of sulfate producing adenosine 5'-phosphosulfate (APS) and diphosphate, the first enzymatic step in sulfur assimilation pathway. APS synthesis involves the formation of a high-energy phosphoric-sulfuric acid anhydride bond driven by GTP hydrolysis by CysN coupled to ATP hydrolysis by CysD. The polypeptide is Sulfate adenylyltransferase subunit 2 (Rhizobium johnstonii (strain DSM 114642 / LMG 32736 / 3841) (Rhizobium leguminosarum bv. viciae)).